The chain runs to 110 residues: uncharacterized protein (110 aa).

An N-terminal signal peptide occupies residues 1–23 (MKRITINIITMFIAAAVISLTGT).

This is an uncharacterized protein from Bacillus subtilis (strain 168).